The primary structure comprises 418 residues: Hydroxysqualene dehydroxylase (418 aa).

Belongs to the HpnE family.

The enzyme catalyses squalene + FAD + H2O + H(+) = hydroxysqualene + FADH2. Its pathway is secondary metabolite biosynthesis; hopanoid biosynthesis. Involved in the biosynthesis of the hopanoid precursor squalene (SQ) from farnesyl diphosphate (FPP). Catalyzes the third (last) step, the reduction of hydroxysqualene (HSQ) to SQ. In Rhodopseudomonas palustris (strain ATCC BAA-98 / CGA009), this protein is Hydroxysqualene dehydroxylase.